The chain runs to 640 residues: Chaperone protein HtpG (640 aa).

Residues 1–348 (MAQYKFETEV…SEDLPLNVSR (348 aa)) form an a; substrate-binding region. The segment at 349 to 565 (EILQQNRILS…ETDPSLQMER (217 aa)) is b. A c region spans residues 566–640 (MMRAMGQFNT…RLNRLMTNLK (75 aa)).

Belongs to the heat shock protein 90 family. As to quaternary structure, homodimer.

It is found in the cytoplasm. Functionally, molecular chaperone. Has ATPase activity. In Treponema denticola (strain ATCC 35405 / DSM 14222 / CIP 103919 / JCM 8153 / KCTC 15104), this protein is Chaperone protein HtpG.